We begin with the raw amino-acid sequence, 169 residues long: SsrA-binding protein (169 aa).

The protein belongs to the SmpB family.

The protein resides in the cytoplasm. Its function is as follows. Required for rescue of stalled ribosomes mediated by trans-translation. Binds to transfer-messenger RNA (tmRNA), required for stable association of tmRNA with ribosomes. tmRNA and SmpB together mimic tRNA shape, replacing the anticodon stem-loop with SmpB. tmRNA is encoded by the ssrA gene; the 2 termini fold to resemble tRNA(Ala) and it encodes a 'tag peptide', a short internal open reading frame. During trans-translation Ala-aminoacylated tmRNA acts like a tRNA, entering the A-site of stalled ribosomes, displacing the stalled mRNA. The ribosome then switches to translate the ORF on the tmRNA; the nascent peptide is terminated with the 'tag peptide' encoded by the tmRNA and targeted for degradation. The ribosome is freed to recommence translation, which seems to be the essential function of trans-translation. This Mycolicibacterium paratuberculosis (strain ATCC BAA-968 / K-10) (Mycobacterium paratuberculosis) protein is SsrA-binding protein.